A 682-amino-acid polypeptide reads, in one-letter code: Guanylate cyclase soluble subunit beta-2 (682 aa).

Histidine 43 contacts heme. The Guanylate cyclase domain maps to 408–536; it reads TILFSDVVTF…DTVNTASRME (129 aa). Positions 592 to 667 are disordered; the sequence is MGRPSAPADG…QPSPDETKTS (76 aa). The span at 649–667 shows a compositional bias: polar residues; it reads RNSTDAVNNQPSPDETKTS.

Belongs to the adenylyl cyclase class-4/guanylyl cyclase family. In terms of assembly, heterodimer of an alpha and a beta chain. Heme serves as cofactor. In terms of tissue distribution, kidney and liver.

Its subcellular location is the cytoplasm. It catalyses the reaction GTP = 3',5'-cyclic GMP + diphosphate. With respect to regulation, activated by nitric oxide in the presence of magnesium or manganese ions. The chain is Guanylate cyclase soluble subunit beta-2 (Gucy1b2) from Rattus norvegicus (Rat).